A 313-amino-acid chain; its full sequence is Ribosomal protein L11 methyltransferase (313 aa).

Residues threonine 164, glycine 185, aspartate 207, and asparagine 249 each coordinate S-adenosyl-L-methionine.

The protein belongs to the methyltransferase superfamily. PrmA family.

The protein resides in the cytoplasm. It carries out the reaction L-lysyl-[protein] + 3 S-adenosyl-L-methionine = N(6),N(6),N(6)-trimethyl-L-lysyl-[protein] + 3 S-adenosyl-L-homocysteine + 3 H(+). Functionally, methylates ribosomal protein L11. The polypeptide is Ribosomal protein L11 methyltransferase (Clostridium botulinum (strain Eklund 17B / Type B)).